The chain runs to 109 residues: MSRISSLQDPFLNALRKEKVNVSVYLVNGIKLQGQVEAFDQFCIVLRNTVNQMVYKHAISTIVPAKSVRMVYSSFNPYHQNSNDEQDENVDDIHSDDLEIQENEGNIHE.

A Sm domain is found at 9–68 (DPFLNALRKEKVNVSVYLVNGIKLQGQVEAFDQFCIVLRNTVNQMVYKHAISTIVPAKSV). A disordered region spans residues 77–109 (PYHQNSNDEQDENVDDIHSDDLEIQENEGNIHE).

The protein belongs to the Hfq family. Homohexamer.

In terms of biological role, RNA chaperone that binds small regulatory RNA (sRNAs) and mRNAs to facilitate mRNA translational regulation in response to envelope stress, environmental stress and changes in metabolite concentrations. Also binds with high specificity to tRNAs. This chain is RNA-binding protein Hfq, found in Francisella tularensis subsp. mediasiatica (strain FSC147).